A 634-amino-acid chain; its full sequence is 1-deoxy-D-xylulose-5-phosphate synthase (634 aa).

Thiamine diphosphate is bound by residues H74 and 115-117 (AHS). A Mg(2+)-binding site is contributed by D146. Thiamine diphosphate-binding positions include 147 to 148 (GA), N176, Y283, and E365. Mg(2+) is bound at residue N176.

Belongs to the transketolase family. DXPS subfamily. In terms of assembly, homodimer. Mg(2+) serves as cofactor. Thiamine diphosphate is required as a cofactor.

It carries out the reaction D-glyceraldehyde 3-phosphate + pyruvate + H(+) = 1-deoxy-D-xylulose 5-phosphate + CO2. It functions in the pathway metabolic intermediate biosynthesis; 1-deoxy-D-xylulose 5-phosphate biosynthesis; 1-deoxy-D-xylulose 5-phosphate from D-glyceraldehyde 3-phosphate and pyruvate: step 1/1. Functionally, catalyzes the acyloin condensation reaction between C atoms 2 and 3 of pyruvate and glyceraldehyde 3-phosphate to yield 1-deoxy-D-xylulose-5-phosphate (DXP). The chain is 1-deoxy-D-xylulose-5-phosphate synthase from Burkholderia mallei (strain ATCC 23344).